The chain runs to 70 residues: MTALAAGIAMLAGLGVGIGIGIATAKAAESVGRQPEAYGRILPLFFIGAALAEAVAIYSFVIAILLVLKV.

Helical transmembrane passes span 3–23 (ALAA…IGIA) and 44–64 (LFFI…VIAI).

This sequence belongs to the ATPase C chain family. F-type ATPases have 2 components, F(1) - the catalytic core - and F(0) - the membrane proton channel. F(1) has five subunits: alpha(3), beta(3), gamma(1), delta(1), epsilon(1). F(0) has three main subunits: a(1), b(2) and c(10-14). The alpha and beta chains form an alternating ring which encloses part of the gamma chain. F(1) is attached to F(0) by a central stalk formed by the gamma and epsilon chains, while a peripheral stalk is formed by the delta and b chains.

Its subcellular location is the cell membrane. Functionally, f(1)F(0) ATP synthase produces ATP from ADP in the presence of a proton or sodium gradient. F-type ATPases consist of two structural domains, F(1) containing the extramembraneous catalytic core and F(0) containing the membrane proton channel, linked together by a central stalk and a peripheral stalk. During catalysis, ATP synthesis in the catalytic domain of F(1) is coupled via a rotary mechanism of the central stalk subunits to proton translocation. Key component of the F(0) channel; it plays a direct role in translocation across the membrane. A homomeric c-ring of between 10-14 subunits forms the central stalk rotor element with the F(1) delta and epsilon subunits. In Caldicellulosiruptor saccharolyticus (strain ATCC 43494 / DSM 8903 / Tp8T 6331), this protein is ATP synthase subunit c.